Here is a 250-residue protein sequence, read N- to C-terminus: 1-(5-phosphoribosyl)-5-[(5-phosphoribosylamino)methylideneamino] imidazole-4-carboxamide isomerase (250 aa).

Asp-12 (proton acceptor) is an active-site residue. The active-site Proton donor is Asp-133.

The protein belongs to the HisA/HisF family.

The protein localises to the cytoplasm. It carries out the reaction 1-(5-phospho-beta-D-ribosyl)-5-[(5-phospho-beta-D-ribosylamino)methylideneamino]imidazole-4-carboxamide = 5-[(5-phospho-1-deoxy-D-ribulos-1-ylimino)methylamino]-1-(5-phospho-beta-D-ribosyl)imidazole-4-carboxamide. It functions in the pathway amino-acid biosynthesis; L-histidine biosynthesis; L-histidine from 5-phospho-alpha-D-ribose 1-diphosphate: step 4/9. This chain is 1-(5-phosphoribosyl)-5-[(5-phosphoribosylamino)methylideneamino] imidazole-4-carboxamide isomerase, found in Zymomonas mobilis subsp. mobilis (strain ATCC 31821 / ZM4 / CP4).